The primary structure comprises 151 residues: Large ribosomal subunit protein uL15 (151 aa).

The disordered stretch occupies residues 1–58 (MTSISLDSLKPNKGARKRKTRKGRGIAAGQGASCGFGMRGQKSRSGRPTRPGFEGGQM). Basic residues predominate over residues 13-24 (KGARKRKTRKGR). The segment covering 26–38 (IAAGQGASCGFGM) has biased composition (gly residues).

Belongs to the universal ribosomal protein uL15 family. As to quaternary structure, part of the 50S ribosomal subunit.

Functionally, binds to the 23S rRNA. In Prochlorococcus marinus (strain SARG / CCMP1375 / SS120), this protein is Large ribosomal subunit protein uL15.